The following is a 217-amino-acid chain: Thiamine-phosphate synthase (217 aa).

4-amino-2-methyl-5-(diphosphooxymethyl)pyrimidine-binding positions include 45–49 (QFRQK) and Asn81. 2 residues coordinate Mg(2+): Asp82 and Asp101. Position 120 (Ser120) interacts with 4-amino-2-methyl-5-(diphosphooxymethyl)pyrimidine. 147 to 149 (TPS) contributes to the 2-[(2R,5Z)-2-carboxy-4-methylthiazol-5(2H)-ylidene]ethyl phosphate binding site. Residue Lys150 participates in 4-amino-2-methyl-5-(diphosphooxymethyl)pyrimidine binding. 2-[(2R,5Z)-2-carboxy-4-methylthiazol-5(2H)-ylidene]ethyl phosphate is bound by residues Gly179 and 197 to 198 (IS).

This sequence belongs to the thiamine-phosphate synthase family. Requires Mg(2+) as cofactor.

The catalysed reaction is 2-[(2R,5Z)-2-carboxy-4-methylthiazol-5(2H)-ylidene]ethyl phosphate + 4-amino-2-methyl-5-(diphosphooxymethyl)pyrimidine + 2 H(+) = thiamine phosphate + CO2 + diphosphate. The enzyme catalyses 2-(2-carboxy-4-methylthiazol-5-yl)ethyl phosphate + 4-amino-2-methyl-5-(diphosphooxymethyl)pyrimidine + 2 H(+) = thiamine phosphate + CO2 + diphosphate. It catalyses the reaction 4-methyl-5-(2-phosphooxyethyl)-thiazole + 4-amino-2-methyl-5-(diphosphooxymethyl)pyrimidine + H(+) = thiamine phosphate + diphosphate. It participates in cofactor biosynthesis; thiamine diphosphate biosynthesis; thiamine phosphate from 4-amino-2-methyl-5-diphosphomethylpyrimidine and 4-methyl-5-(2-phosphoethyl)-thiazole: step 1/1. In terms of biological role, condenses 4-methyl-5-(beta-hydroxyethyl)thiazole monophosphate (THZ-P) and 2-methyl-4-amino-5-hydroxymethyl pyrimidine pyrophosphate (HMP-PP) to form thiamine monophosphate (TMP). The protein is Thiamine-phosphate synthase of Helicobacter pylori (strain J99 / ATCC 700824) (Campylobacter pylori J99).